Reading from the N-terminus, the 290-residue chain is 4-hydroxy-tetrahydrodipicolinate synthase (290 aa).

Threonine 44 provides a ligand contact to pyruvate. Residue tyrosine 132 is the Proton donor/acceptor of the active site. The active-site Schiff-base intermediate with substrate is lysine 160. Isoleucine 202 lines the pyruvate pocket.

Belongs to the DapA family. As to quaternary structure, homotetramer; dimer of dimers.

It localises to the cytoplasm. It carries out the reaction L-aspartate 4-semialdehyde + pyruvate = (2S,4S)-4-hydroxy-2,3,4,5-tetrahydrodipicolinate + H2O + H(+). Its pathway is amino-acid biosynthesis; L-lysine biosynthesis via DAP pathway; (S)-tetrahydrodipicolinate from L-aspartate: step 3/4. Catalyzes the condensation of (S)-aspartate-beta-semialdehyde [(S)-ASA] and pyruvate to 4-hydroxy-tetrahydrodipicolinate (HTPA). The sequence is that of 4-hydroxy-tetrahydrodipicolinate synthase from Geobacter metallireducens (strain ATCC 53774 / DSM 7210 / GS-15).